The chain runs to 342 residues: (Lyso)-N-acylphosphatidylethanolamine lipase (342 aa).

Residues 70–201 (PLVMVHGFGG…KAVASVLGRS (132 aa)) form the AB hydrolase-1 domain.

It belongs to the peptidase S33 family. ABHD4/ABHD5 subfamily.

The catalysed reaction is N-hexadecanoyl-1,2-di-(9Z-octadecenoyl)-sn-glycero-3-phosphoethanolamine + H2O = N-hexadecanoyl-1-(9Z-octadecenoyl)-sn-glycero-3-phosphoethanolamine + (9Z)-octadecenoate + H(+). It catalyses the reaction an N-acyl-1,2-diacyl-sn-glycero-3-phosphoethanolamine + H2O = N,1-diacyl-sn-glycero-3-phosphoethanolamine + a fatty acid + H(+). The enzyme catalyses N-hexadecanoyl-1-(9Z-octadecenoyl)-sn-glycero-3-phosphoethanolamine + H2O = N-hexadecanoyl-sn-glycero-3-phosphoethanolamine + (9Z)-octadecenoate + H(+). It carries out the reaction N-octadecanoyl-1-(9Z-octadecenoyl)-sn-glycero-3-phosphoethanolamine + H2O = N-octadecanoyl-sn-glycero-3-phospho-ethanolamine + (9Z)-octadecenoate + H(+). The catalysed reaction is N-eicosanoyl-1-(9Z-octadecenoyl)-sn-glycero-3-phosphoethanolamine + H2O = N-eicosanoyl-sn-glycero-3-phosphoethanolamine + (9Z)-octadecenoate + H(+). It catalyses the reaction N,1-di-(9Z-octadecenoyl)-sn-glycero-3-phosphoethanolamine + H2O = N-(9Z-octadecenoyl)-sn-glycero-3-phosphoethanolamine + (9Z)-octadecenoate + H(+). The enzyme catalyses N-(5Z,8Z,11Z,14Z-eicosatetraenoyl)-1-(9Z-octadecenoyl)-sn-glycero-3-phosphoethanolamine + H2O = N-(5Z,8Z,11Z,14Z-eicosatetraenoyl)-sn-glycero-3-phosphoethanolamine + (9Z)-octadecenoate + H(+). It carries out the reaction 1-octadecanoyl-2-(9Z-octadecenoyl)-sn-glycero-3-phospho-(N-hexadecanoyl)-serine + H2O = 1-octadecanoyl-2-hydroxy-sn-glycero-3-phospho-(N-hexadecanoyl)-serine + (9Z)-octadecenoate + H(+). The catalysed reaction is 1-O-(1Z-octadecenoyl)-2-(9Z-octadecenoyl)-sn-glycero-3-phospho-N-hexadecanoyl-ethanolamine + H2O = 1-O-(1Z-octadecenyl)-sn-glycero-3-phospho-N-hexadecanoyl-ethanolamine + (9Z)-octadecenoate + H(+). It catalyses the reaction N,1-diacyl-sn-glycero-3-phosphoethanolamine + H2O = N-acyl-sn-glycero-3-phosphoethanolamine + a fatty acid + H(+). Lysophospholipase selective for N-acyl phosphatidylethanolamine (NAPE). Contributes to the biosynthesis of N-acyl ethanolamines, including the endocannabinoid anandamide by hydrolyzing the sn-1 and sn-2 acyl chains from N-acyl phosphatidylethanolamine (NAPE) generating glycerophospho-N-acyl ethanolamine (GP-NAE), an intermediate for N-acyl ethanolamine biosynthesis. Hydrolyzes substrates bearing saturated, monounsaturated, polyunsaturated N-acyl chains. Shows no significant activity towards other lysophospholipids, including lysophosphatidylcholine, lysophosphatidylethanolamine and lysophosphatidylserine. This chain is (Lyso)-N-acylphosphatidylethanolamine lipase, found in Homo sapiens (Human).